We begin with the raw amino-acid sequence, 429 residues long: Serine--tRNA ligase (429 aa).

Thr-235–Glu-237 contacts L-serine. An ATP-binding site is contributed by Arg-266–Glu-268. Glu-289 contributes to the L-serine binding site. An ATP-binding site is contributed by Glu-353–Ser-356. Ser-389 is a binding site for L-serine.

It belongs to the class-II aminoacyl-tRNA synthetase family. Type-1 seryl-tRNA synthetase subfamily. In terms of assembly, homodimer. The tRNA molecule binds across the dimer.

It localises to the cytoplasm. The catalysed reaction is tRNA(Ser) + L-serine + ATP = L-seryl-tRNA(Ser) + AMP + diphosphate + H(+). It catalyses the reaction tRNA(Sec) + L-serine + ATP = L-seryl-tRNA(Sec) + AMP + diphosphate + H(+). It functions in the pathway aminoacyl-tRNA biosynthesis; selenocysteinyl-tRNA(Sec) biosynthesis; L-seryl-tRNA(Sec) from L-serine and tRNA(Sec): step 1/1. Functionally, catalyzes the attachment of serine to tRNA(Ser). Is also able to aminoacylate tRNA(Sec) with serine, to form the misacylated tRNA L-seryl-tRNA(Sec), which will be further converted into selenocysteinyl-tRNA(Sec). The polypeptide is Serine--tRNA ligase (Histophilus somni (strain 129Pt) (Haemophilus somnus)).